Reading from the N-terminus, the 160-residue chain is Cytochrome b6-f complex subunit 4 (160 aa).

The next 3 membrane-spanning stretches (helical) occupy residues 36–56, 95–115, and 131–151; these read LLYIFPVVILGTIACTVGLAV, LLGVLLMAAVPAGLLTVPFLE, and TIFLIGTAVAIWLGIGAALPI.

It belongs to the cytochrome b family. PetD subfamily. The 4 large subunits of the cytochrome b6-f complex are cytochrome b6, subunit IV (17 kDa polypeptide, petD), cytochrome f and the Rieske protein, while the 4 small subunits are petG, petL, petM and petN. The complex functions as a dimer.

It localises to the plastid. The protein localises to the chloroplast thylakoid membrane. Its function is as follows. Component of the cytochrome b6-f complex, which mediates electron transfer between photosystem II (PSII) and photosystem I (PSI), cyclic electron flow around PSI, and state transitions. The protein is Cytochrome b6-f complex subunit 4 of Anthoceros angustus (Hornwort).